A 220-amino-acid polypeptide reads, in one-letter code: Cell surface glycolipoprotein MPB83 (220 aa).

The signal sequence occupies residues 1–24 (MINVQAKPAAAASLAAIAIAFLAG). Residue C25 is the site of N-palmitoyl cysteine attachment. C25 is lipidated: S-diacylglycerol cysteine. 2 O-linked (Man...) threonine glycosylation sites follow: T48 and T49. Positions 83–215 (QDPVATAASN…ATVYMIDTVL (133 aa)) constitute an FAS1 domain.

As to quaternary structure, interacts with host (human) TLR2. O-glycosylated. Contains 0-3 mannose residues attached to residues 48-49 in various configurations; the dominant glycoform is Thr-48(Man)/Thr-49(Man2) with an unusual Man(1-&gt;3)Man linkage, but Thr48(Man3)/Thr49(Man0) through to Thr48(Man0/)Thr49(Man3) are also seen. Post-translationally, when isolated from culture filtrate runs as 25 and 23 kDa proteins; the larger protein is much less abundant, mostly associated with the cell and starts at residue 28, the shorter is more abundant and starts at residue 48.

Its subcellular location is the cell membrane. It localises to the secreted. It is found in the cell wall. Its function is as follows. Induces expression of human (host) matrix metalloproteinase-9 (MMP9) in a TLR1/TLR2-dependent fashion; the acylated 20 first mature residues (residues 25-40) induce the most expression, but whole recombinant protein (non-acylated and non-glycosylated), and mannosylated but not acylated protein (residues 26-220) also induce expression. In Mycobacterium bovis (strain ATCC BAA-935 / AF2122/97), this protein is Cell surface glycolipoprotein MPB83 (mpb83).